We begin with the raw amino-acid sequence, 288 residues long: Aminoglycoside 6-adenylyltransferase (288 aa).

The catalysed reaction is streptomycin + ATP = 6-O-adenylylstreptomycin + diphosphate. Its function is as follows. Mediates bacterial resistance to streptomycin, is probably a streptomycin 6-adenylyltransferase. The polypeptide is Aminoglycoside 6-adenylyltransferase (Campylobacter jejuni).